The primary structure comprises 58 residues: uncharacterized protein (58 aa).

A helical membrane pass occupies residues 24–44; that stretch reads LSVYLGLATTIVCIVLFFTML.

The protein resides in the membrane. This is an uncharacterized protein from Haemophilus influenzae (strain ATCC 51907 / DSM 11121 / KW20 / Rd).